The primary structure comprises 455 residues: Probable circularly permuted 1,3-beta-glucanase TOS1 (455 aa).

An N-terminal signal peptide occupies residues 1-23 (MLQKLSMTALVGLFSSVVSLVNA). The disordered stretch occupies residues 158–221 (TADSTNTVVG…SSSSSSNTNG (64 aa)). The segment covering 172–189 (SSYTKDSTVLSSSAQAVE) has biased composition (polar residues). The segment covering 190–219 (TSESQSSISSSKTTSSAAAASSSSSSSSNT) has biased composition (low complexity). A glycan (N-linked (GlcNAc...) asparagine) is linked at asparagine 236. Residues 372–377 (EMDLFE) carry the ExDxxE motif motif. A glycan (N-linked (GlcNAc...) asparagine) is linked at asparagine 417.

Belongs to the PGA52 family.

Its subcellular location is the secreted. The protein localises to the cell wall. The enzyme catalyses Hydrolysis of (1-&gt;3)-beta-D-glucosidic linkages in (1-&gt;3)-beta-D-glucans.. Probable circularly permuted 1,3-beta-glucanase involved in cell wall modification through beta-1,3-glucan network alterations such as increased branching or remodeling. The sequence is that of Probable circularly permuted 1,3-beta-glucanase TOS1 from Saccharomyces cerevisiae (strain ATCC 204508 / S288c) (Baker's yeast).